The chain runs to 1088 residues: MSQSNSHGQSNLAKFAFNIYGTLSTNSSTPQSHEISPSSSLSSSRSKKQTSQYNTQDTNNNRLSYYCDKEIISLSQLNCSLSIGGYSGDLQHHVVIGGKNYLRLLCVSESQQRIISGINLLESKSIYNSRAPNKLINVNTIKTFADTIATGLSNGVVSIYKISPNGQSKVTGKYSDHNRTINSLDFIESENQLLSGSQDGTIKLWDLRSSSTKPVMTVQANLHSDPIRACQYSPHSAVRNKICVLSVHDSGALCKFDLRTKSGGKVYSPEKKWNLHTGPALSLHIHPEKELVVTGGRDKRISIFNYGERQSRNTPQNLINTYGPVVKVRWSTYTNTEETAEEFEENKQAKPNTLYNYDIACSYLNDDPTITIYNLGRKFIPKQIIHSKKPIQNFIWARNETRSRKIWTISKSSTFSSYNLDRLEDSDVSRPIEDLNNIAMTWNNNNDFCAVSQARYDYDLETYENGINETTEENFDAERNYSLGNEELIHSQANSLTASPVDKPQLTRSLTFNPASSFSTFSPVLVARAATGFLQNDSATSSSSIPNMQVSSSRPKLTRNTSQTTQDSSSSQFASVLPPPSASQTYSSPQYKKNNPPRFMNNPAYVIPVSIPIPANDEYVFRKLSSESLVSTPDGFTLVDVCLLNASVAASVGNNRTSQIWRLLAVSIQEEFESGIEPRRIYAFQPEAINKLPQDVQETSTNANDTLHAETTNSNFVESFKSTSTSGSQFGKQSDKDERKLQSKNSSGNLMDMINKANRTNSFSATSFKFKEQERKEDESQKAQSIKDENERASIHSKSAPISISSHPEDLDDENMGSNNSAALKFSPPSVGVSIPSTRIISSSLASSPKSVRGPSGVKSHISRSRPSPPVQTWLKQKNLEVSNGSAMASTSGLSLTLKRNKTNEEGDQLTKAWKFKSLLRKSLDYATLQGDIIFCSTAALLFYDIVPEIISQFECLEWLGIYIEVLQRKRLFVNAINVIKCATADIQEKLQKLYCQDLSLRFYCSNCQALLVNEKSKFSGKGEFGYWYCDECSKLQSQCVYCNEPCKGLAVTVGLKCGHHGHFGCLKEWFIEDQNTECPGGCGYQII.

Residues 26–56 (NSSTPQSHEISPSSSLSSSRSKKQTSQYNTQ) form a disordered region. Residues 27–44 (SSTPQSHEISPSSSLSSS) show a composition bias toward low complexity. WD repeat units follow at residues 131-170 (APNK…QSKV), 176-215 (DHNR…TKPV), 222-266 (LHSD…GGKV), 275-314 (LHTG…SRNT), 367-417 (DPTI…TFSS), 432-473 (IEDL…TTEE), and 502-546 (DKPQ…SSIP). Residues 537 to 560 (DSATSSSSIPNMQVSSSRPKLTRN) show a composition bias toward polar residues. The tract at residues 537-597 (DSATSSSSIP…SPQYKKNNPP (61 aa)) is disordered. Residues 561–572 (TSQTTQDSSSSQ) show a composition bias toward low complexity. Polar residues predominate over residues 582-593 (ASQTYSSPQYKK). The stretch at 631 to 671 (STPDGFTLVDVCLLNASVAASVGNNRTSQIWRLLAVSIQEE) is one WD 8 repeat. Over residues 709 to 732 (AETTNSNFVESFKSTSTSGSQFGK) the composition is skewed to polar residues. 3 disordered regions span residues 709 to 751 (AETT…GNLM), 764 to 829 (SATS…FSPP), and 844 to 871 (SLAS…SPPV). A compositionally biased stretch (basic and acidic residues) spans 769–794 (KFKEQERKEDESQKAQSIKDENERAS). Residues 796–806 (HSKSAPISISS) show a composition bias toward polar residues. Residues 1040 to 1083 (CVYCNEPCKGLAVTVGLKCGHHGHFGCLKEWFIEDQNTECPGGC) form an RING-type; degenerate zinc finger.

The protein belongs to the WD repeat RTC1 family.

Its subcellular location is the vacuole. Its function is as follows. May be involved in a process influencing telomere capping. The sequence is that of Restriction of telomere capping protein 1 (RTC1) from Candida albicans (strain WO-1) (Yeast).